A 213-amino-acid chain; its full sequence is tRNA (guanine-N(7)-)-methyltransferase (213 aa).

Residues glutamate 44, glutamate 69, aspartate 96, and aspartate 118 each coordinate S-adenosyl-L-methionine. Residue aspartate 118 is part of the active site. Residue lysine 122 participates in substrate binding. Residues arginine 124–arginine 129 are interaction with RNA. Substrate is bound by residues aspartate 154 and threonine 191–glutamate 194.

Belongs to the class I-like SAM-binding methyltransferase superfamily. TrmB family. Homodimer.

It catalyses the reaction guanosine(46) in tRNA + S-adenosyl-L-methionine = N(7)-methylguanosine(46) in tRNA + S-adenosyl-L-homocysteine. It participates in tRNA modification; N(7)-methylguanine-tRNA biosynthesis. Functionally, catalyzes the formation of N(7)-methylguanine at position 46 (m7G46) in tRNA. This chain is tRNA (guanine-N(7)-)-methyltransferase, found in Bacillus subtilis (strain 168).